The following is a 184-amino-acid chain: Photosystem I assembly protein Ycf4 (184 aa).

The next 2 membrane-spanning stretches (helical) occupy residues 21-43 (NFCW…ISSY) and 68-90 (FYGI…NVGS).

Belongs to the Ycf4 family.

It localises to the plastid. The protein resides in the chloroplast thylakoid membrane. Functionally, seems to be required for the assembly of the photosystem I complex. The protein is Photosystem I assembly protein Ycf4 of Physcomitrium patens (Spreading-leaved earth moss).